We begin with the raw amino-acid sequence, 70 residues long: UPF0352 protein PSHAa1818 (70 aa).

This sequence belongs to the UPF0352 family.

This Pseudoalteromonas translucida (strain TAC 125) protein is UPF0352 protein PSHAa1818.